Consider the following 66-residue polypeptide: Large ribosomal subunit protein bL35 (66 aa).

Composition is skewed to basic residues over residues 1–15 (MSKL…KRFK) and 22–43 (ILHK…RKRR). Residues 1–43 (MSKLKTRSSAAKRFKVTATGKILHKKAGKRHNLSKKSESRKRR) are disordered.

Belongs to the bacterial ribosomal protein bL35 family.

This chain is Large ribosomal subunit protein bL35, found in Dictyoglomus turgidum (strain DSM 6724 / Z-1310).